Here is a 364-residue protein sequence, read N- to C-terminus: Aspartate aminotransferase (364 aa).

The L-aspartate site is built by glycine 23, tryptophan 99, and asparagine 143. An N6-(pyridoxal phosphate)lysine modification is found at lysine 200. Arginine 320 provides a ligand contact to L-aspartate.

Belongs to the class-I pyridoxal-phosphate-dependent aminotransferase family. As to quaternary structure, homodimer. It depends on pyridoxal 5'-phosphate as a cofactor.

It localises to the cytoplasm. It catalyses the reaction L-aspartate + 2-oxoglutarate = oxaloacetate + L-glutamate. The chain is Aspartate aminotransferase (aspC) from Thermococcus kodakarensis (strain ATCC BAA-918 / JCM 12380 / KOD1) (Pyrococcus kodakaraensis (strain KOD1)).